The sequence spans 236 residues: Ribosome maturation protein SDO1 homolog (236 aa).

It belongs to the SDO1/SBDS family.

This chain is Ribosome maturation protein SDO1 homolog, found in Pyrococcus horikoshii (strain ATCC 700860 / DSM 12428 / JCM 9974 / NBRC 100139 / OT-3).